A 416-amino-acid chain; its full sequence is D-amino acid dehydrogenase (416 aa).

3 to 17 (ITILGSGVIGVTTAY) serves as a coordination point for FAD.

It belongs to the DadA oxidoreductase family. FAD is required as a cofactor.

The enzyme catalyses a D-alpha-amino acid + A + H2O = a 2-oxocarboxylate + AH2 + NH4(+). The protein operates within amino-acid degradation; D-alanine degradation; NH(3) and pyruvate from D-alanine: step 1/1. In terms of biological role, oxidative deamination of D-amino acids. This chain is D-amino acid dehydrogenase, found in Brucella anthropi (strain ATCC 49188 / DSM 6882 / CCUG 24695 / JCM 21032 / LMG 3331 / NBRC 15819 / NCTC 12168 / Alc 37) (Ochrobactrum anthropi).